We begin with the raw amino-acid sequence, 85 residues long: Small ribosomal subunit protein uS17 (85 aa).

Belongs to the universal ribosomal protein uS17 family. In terms of assembly, part of the 30S ribosomal subunit.

One of the primary rRNA binding proteins, it binds specifically to the 5'-end of 16S ribosomal RNA. The sequence is that of Small ribosomal subunit protein uS17 from Lachnoclostridium phytofermentans (strain ATCC 700394 / DSM 18823 / ISDg) (Clostridium phytofermentans).